A 517-amino-acid chain; its full sequence is MASFKPTKVLSYPKLGEKVTEETLYWKNYKPPVQIKEFGAVSKIDFSPLPPHNYAVTASTRVHIYGLHSQEPIRNFTRFHDTAYGGSFRGDGKLLVAGSEEGLIRLFDIGGRVSLRQFKGHSKAVHATSFLSDGFRVLSGSDDLTCRVWDVASAVELSSITEHTDYIRAIAPSKLNPDVFVTGSYDHTVKMFDVRSGNSVMTMQHGQPVECVLLYPSEALLVSTGGRYVKVWDLLKGGQQLVSLKNHHKTVTCACLSSSNKLLTASLDRHVKVYNSSYKVVHNFDCASSILSLAVAPDDEAVAVGMTNGVLSIRHRKHKEEKEALTGRRKRGPSYRFFVKGKNFVPRQDDFLVSKPVRQHLQKYDKQLKRFEVSKALDTALETWTRTTKPEVTVAVIMELNRRGTLKNALAGRDEVSLTKILNFLLKHITDPRFSRPLLTVGDIVLDLYQQVIPQSPVVERLLQRLYEILGREAELQQELLQVLGILDTLFASLMPRKEVASFGAAAAAQESQLQAA.

WD repeat units lie at residues 36–75 (KEFG…PIRN), 78–117 (RFHD…SLRQ), 120–159 (GHSK…ELSS), 162–202 (EHTD…SVMT), 204–242 (QHGQ…QQLV), 246–285 (NHHK…HNFD), and 287–324 (ASSI…EKEA).

Part of the small subunit (SSU) processome, composed of more than 70 proteins and the RNA chaperone small nucleolar RNA (snoRNA) U3. May be a component of the proposed t-UTP subcomplex of the ribosomal small subunit (SSU) processome.

Its subcellular location is the nucleus. It is found in the nucleolus. Its function is as follows. Ribosome biogenesis factor. Involved in nucleolar processing of pre-18S ribosomal RNA. Required for optimal pre-ribosomal RNA transcription by RNA polymerase I. Part of the small subunit (SSU) processome, first precursor of the small eukaryotic ribosomal subunit. During the assembly of the SSU processome in the nucleolus, many ribosome biogenesis factors, an RNA chaperone and ribosomal proteins associate with the nascent pre-rRNA and work in concert to generate RNA folding, modifications, rearrangements and cleavage as well as targeted degradation of pre-ribosomal RNA by the RNA exosome. The chain is U3 small nucleolar RNA-associated protein 15 homolog (utp15) from Danio rerio (Zebrafish).